A 188-amino-acid polypeptide reads, in one-letter code: NADH-quinone oxidoreductase subunit I (188 aa).

2 4Fe-4S ferredoxin-type domains span residues 44-74 (LNRY…VEGA) and 90-119 (RVYQ…MTNE). Residues Cys-54, Cys-57, Cys-60, Cys-64, Cys-99, Cys-102, Cys-105, and Cys-109 each contribute to the [4Fe-4S] cluster site. The disordered stretch occupies residues 144–188 (GMVDSPHPMAPGTTAEDYYRGTVTGGAAPASQDEPEADDTAGDRP). Positions 176 to 188 (DEPEADDTAGDRP) are enriched in acidic residues.

The protein belongs to the complex I 23 kDa subunit family. NDH-1 is composed of 14 different subunits. Subunits NuoA, H, J, K, L, M, N constitute the membrane sector of the complex. Requires [4Fe-4S] cluster as cofactor.

It is found in the cell membrane. It carries out the reaction a quinone + NADH + 5 H(+)(in) = a quinol + NAD(+) + 4 H(+)(out). In terms of biological role, NDH-1 shuttles electrons from NADH, via FMN and iron-sulfur (Fe-S) centers, to quinones in the respiratory chain. The immediate electron acceptor for the enzyme in this species is believed to be ubiquinone. Couples the redox reaction to proton translocation (for every two electrons transferred, four hydrogen ions are translocated across the cytoplasmic membrane), and thus conserves the redox energy in a proton gradient. The polypeptide is NADH-quinone oxidoreductase subunit I (Rhodococcus opacus (strain B4)).